The sequence spans 246 residues: tRNA (guanine-N(1)-)-methyltransferase (246 aa).

S-adenosyl-L-methionine-binding positions include glycine 114 and 134-139; that span reads IGDYIL.

This sequence belongs to the RNA methyltransferase TrmD family. As to quaternary structure, homodimer.

It is found in the cytoplasm. It catalyses the reaction guanosine(37) in tRNA + S-adenosyl-L-methionine = N(1)-methylguanosine(37) in tRNA + S-adenosyl-L-homocysteine + H(+). Its function is as follows. Specifically methylates guanosine-37 in various tRNAs. The protein is tRNA (guanine-N(1)-)-methyltransferase of Coxiella burnetii (strain CbuK_Q154) (Coxiella burnetii (strain Q154)).